The sequence spans 112 residues: Large ribosomal subunit protein eL30z (112 aa).

It belongs to the eukaryotic ribosomal protein eL30 family.

This chain is Large ribosomal subunit protein eL30z (RPL30A), found in Arabidopsis thaliana (Mouse-ear cress).